The sequence spans 227 residues: UMP-CMP kinase (227 aa).

An ATP-binding site is contributed by 35 to 40 (GAGKGT). Positions 55 to 85 (SAGDLLRAEQHREGSEYGQLIQTCIKEGSIV) are NMP. A ribonucleoside 5'-phosphate-binding positions include Arg61, 83–85 (SIV), 122–125 (GFPR), and Gln129. An LID region spans residues 159–169 (ERGKTSGREDD). Arg160 provides a ligand contact to ATP. Arg166 and Arg177 together coordinate a ribonucleoside 5'-phosphate. Val205 contacts ATP.

Belongs to the adenylate kinase family. UMP-CMP kinase subfamily. In terms of assembly, monomer. Requires Mg(2+) as cofactor.

The protein resides in the cytoplasm. It is found in the nucleus. The catalysed reaction is UMP + ATP = UDP + ADP. Catalyzes the phosphorylation of pyrimidine nucleoside monophosphates at the expense of ATP. Plays an important role in de novo pyrimidine nucleotide biosynthesis. Has preference for UMP and CMP as phosphate acceptors, but can also use AMP and dCMP to a lesser extent. May play a role during the formation of basidiospores in the gill tissue. This Lentinula edodes (Shiitake mushroom) protein is UMP-CMP kinase (uck1).